Here is a 67-residue protein sequence, read N- to C-terminus: Large ribosomal subunit protein uL29 (67 aa).

Belongs to the universal ribosomal protein uL29 family.

The protein is Large ribosomal subunit protein uL29 of Desulfitobacterium hafniense (strain DSM 10664 / DCB-2).